The sequence spans 184 residues: Tumor necrosis factor alpha-induced protein 8-like protein 2 (184 aa).

Phosphoserine is present on Ser3.

The protein belongs to the TNFAIP8 family. TNFAIP8L2 subfamily. As to quaternary structure, may interact with CASP8; however, such result is unclear since could not reproduce the interaction with CASP8. Interacts with RAC1. Post-translationally, phosphorylated by TAK1/MAP3K7; this phosphorylation triggers association with BTRC and subsequent ubiquitination and degradation. Ubiquitinated in a BTRC-depdent manner; leading to degradation mediated through the proteasome pathway.

The protein resides in the cytoplasm. The protein localises to the nucleus. It localises to the lysosome. Functionally, acts as a negative regulator of innate and adaptive immunity by maintaining immune homeostasis. Plays a regulatory role in the Toll-like signaling pathway by determining the strength of LPS-induced signaling and gene expression. Inhibits TCR-mediated T-cell activation and negatively regulate T-cell function to prevent hyperresponsiveness. Also inhibits autolysosome formation via negatively modulating MTOR activation by interacting with RAC1 and promoting the disassociation of the RAC1-MTOR complex. Plays an essential role in NK-cell biology by acting as a checkpoint and displaying an expression pattern correlating with NK-cell maturation process and by negatively regulating NK-cell maturation and antitumor immunity. Mechanistically, suppresses IL-15-triggered mTOR activity in NK-cells. The protein is Tumor necrosis factor alpha-induced protein 8-like protein 2 (TNFAIP8L2) of Otolemur garnettii (Small-eared galago).